The primary structure comprises 284 residues: 2-dehydro-3-deoxyphosphooctonate aldolase (284 aa).

It belongs to the KdsA family.

It localises to the cytoplasm. The catalysed reaction is D-arabinose 5-phosphate + phosphoenolpyruvate + H2O = 3-deoxy-alpha-D-manno-2-octulosonate-8-phosphate + phosphate. Its pathway is carbohydrate biosynthesis; 3-deoxy-D-manno-octulosonate biosynthesis; 3-deoxy-D-manno-octulosonate from D-ribulose 5-phosphate: step 2/3. It functions in the pathway bacterial outer membrane biogenesis; lipopolysaccharide biosynthesis. This is 2-dehydro-3-deoxyphosphooctonate aldolase from Haemophilus influenzae (strain 86-028NP).